The following is a 98-amino-acid chain: TACTTTQQTAAYKTLVSILSESSFNQCSKDSGYSMLTATALPTNAQYKLMCASTACKSMINKIVVLNPPDCDLTVPTSGLVLDVYTYANGFSTKCASL.

3 disulfides stabilise this stretch: C3/C71, C27/C56, and C51/C95.

This sequence belongs to the elicitin family.

It is found in the secreted. In terms of biological role, induces local and distal defense responses (incompatible hypersensitive reaction) in plants from the solanaceae and cruciferae families. Elicits leaf necrosis and causes the accumulation of pathogenesis-related proteins. Might interact with the lipidic molecules of the plasma membrane. The sequence is that of Beta-elicitin MGM-beta from Phytophthora megasperma (Potato pink rot fungus).